The following is a 375-amino-acid chain: tRNA-specific 2-thiouridylase MnmA (375 aa).

ATP contacts are provided by residues 13–20 and M39; that span reads AMSGGVDS. C111 (nucleophile) is an active-site residue. C111 and C208 are oxidised to a cystine. Residue G135 coordinates ATP. The interaction with tRNA stretch occupies residues 158–160; that stretch reads KDQ. C208 acts as the Cysteine persulfide intermediate in catalysis. The interval 313–314 is interaction with tRNA; sequence RY.

Belongs to the MnmA/TRMU family.

The protein localises to the cytoplasm. The enzyme catalyses S-sulfanyl-L-cysteinyl-[protein] + uridine(34) in tRNA + AH2 + ATP = 2-thiouridine(34) in tRNA + L-cysteinyl-[protein] + A + AMP + diphosphate + H(+). Functionally, catalyzes the 2-thiolation of uridine at the wobble position (U34) of tRNA, leading to the formation of s(2)U34. The chain is tRNA-specific 2-thiouridylase MnmA from Geotalea uraniireducens (strain Rf4) (Geobacter uraniireducens).